A 261-amino-acid chain; its full sequence is MPSDPGPEAGSGWPGLLMSCLKGPHVILKMEAMKIVHPEKFPELPAAPCFPPAPRPTPTLAPKRAWPSDTEIIVNQACGGDMPALEGAPHTPPLPRRPRKGSSELGFPRVAPEDEVIVNQYVIRPGPSASAASSAAAGEPLECPTCGHSYNVTQRRPRVLSCLHSVCEQCLQILYESCPKYKFISCPTCRRETVLFTDYGLAALAVNTSILSRLPPEALTAPSGGQWGAEPEGSCYQTFRQYCGAACTCHVRNPLSACSIM.

Residues 83-106 are disordered; sequence PALEGAPHTPPLPRRPRKGSSELG. Residue Ser102 is modified to Phosphoserine. The RING-type zinc-finger motif lies at 143–190; sequence CPTCGHSYNVTQRRPRVLSCLHSVCEQCLQILYESCPKYKFISCPTCR.

The chain is RING finger protein 208 (RNF208) from Homo sapiens (Human).